Consider the following 41-residue polypeptide: Large ribosomal subunit protein bL36 (41 aa).

It belongs to the bacterial ribosomal protein bL36 family.

This is Large ribosomal subunit protein bL36 from Rhodopseudomonas palustris (strain BisB18).